Reading from the N-terminus, the 874-residue chain is Alanine--tRNA ligase (874 aa).

Positions 562, 566, 665, and 669 each coordinate Zn(2+).

This sequence belongs to the class-II aminoacyl-tRNA synthetase family. Zn(2+) is required as a cofactor.

The protein localises to the cytoplasm. It carries out the reaction tRNA(Ala) + L-alanine + ATP = L-alanyl-tRNA(Ala) + AMP + diphosphate. In terms of biological role, catalyzes the attachment of alanine to tRNA(Ala) in a two-step reaction: alanine is first activated by ATP to form Ala-AMP and then transferred to the acceptor end of tRNA(Ala). Also edits incorrectly charged Ser-tRNA(Ala) and Gly-tRNA(Ala) via its editing domain. The protein is Alanine--tRNA ligase of Stutzerimonas stutzeri (strain A1501) (Pseudomonas stutzeri).